The chain runs to 257 residues: 3-methyl-2-oxobutanoate hydroxymethyltransferase (257 aa).

Mg(2+)-binding residues include Asp-42 and Asp-81. Residues 42–43 (DS), Asp-81, and Lys-110 contribute to the 3-methyl-2-oxobutanoate site. Residue Glu-112 coordinates Mg(2+). The Proton acceptor role is filled by Glu-176.

It belongs to the PanB family. As to quaternary structure, homodecamer; pentamer of dimers. Requires Mg(2+) as cofactor.

The protein localises to the cytoplasm. It catalyses the reaction 3-methyl-2-oxobutanoate + (6R)-5,10-methylene-5,6,7,8-tetrahydrofolate + H2O = 2-dehydropantoate + (6S)-5,6,7,8-tetrahydrofolate. It participates in cofactor biosynthesis; (R)-pantothenate biosynthesis; (R)-pantoate from 3-methyl-2-oxobutanoate: step 1/2. Catalyzes the reversible reaction in which hydroxymethyl group from 5,10-methylenetetrahydrofolate is transferred onto alpha-ketoisovalerate to form ketopantoate. This chain is 3-methyl-2-oxobutanoate hydroxymethyltransferase, found in Pelagibacter ubique (strain HTCC1062).